The primary structure comprises 242 residues: Ribosomal RNA large subunit methyltransferase E (242 aa).

Residues Gly-64, Trp-66, Asp-84, Asp-100, and Asp-125 each coordinate S-adenosyl-L-methionine. Lys-165 serves as the catalytic Proton acceptor. The segment at 198–242 (SSETFLLGRGLKKASPNGLDSRSGTAAEPAPLVPIGTNSMPANGD) is disordered. Positions 233–242 (GTNSMPANGD) are enriched in polar residues.

It belongs to the class I-like SAM-binding methyltransferase superfamily. RNA methyltransferase RlmE family.

It localises to the cytoplasm. The catalysed reaction is uridine(2552) in 23S rRNA + S-adenosyl-L-methionine = 2'-O-methyluridine(2552) in 23S rRNA + S-adenosyl-L-homocysteine + H(+). Its function is as follows. Specifically methylates the uridine in position 2552 of 23S rRNA at the 2'-O position of the ribose in the fully assembled 50S ribosomal subunit. This Verminephrobacter eiseniae (strain EF01-2) protein is Ribosomal RNA large subunit methyltransferase E.